The sequence spans 184 residues: Flavodoxin FldP (184 aa).

In terms of domain architecture, Flavodoxin-like spans 4 to 176 (AVVVYFSGYG…TVKLYAARVA (173 aa)). FMN contacts are provided by residues 10 to 14 (SGYGH) and 91 to 147 (GFTN…SVGA).

The protein belongs to the FldP flavodoxin family. It depends on FMN as a cofactor.

Flavodoxins are low-potential electron donors to a number of redox enzymes. FldP protects the cell from oxidative stress and reactive oxygen species (ROS) damage, thereby expanding the capabilities of P.aeruginosa to thrive in hostile environments, and contributes to bacterial survival within the host. In vitro, is able to mediate ferredoxin-NADP(H) reductase (FNR)-driven cytochrome c reduction. This is Flavodoxin FldP from Pseudomonas aeruginosa (strain UCBPP-PA14).